The chain runs to 481 residues: p-aminobenzoyl-glutamate hydrolase subunit B (481 aa).

As to quaternary structure, forms a heterodimer with AbgA. Mn(2+) serves as cofactor.

In terms of biological role, component of the p-aminobenzoyl-glutamate hydrolase multicomponent enzyme system which catalyzes the cleavage of p-aminobenzoyl-glutamate (PABA-GLU) to form p-aminobenzoate (PABA) and glutamate. AbgAB does not degrade dipeptides and the physiological role of abgABT should be clarified. The protein is p-aminobenzoyl-glutamate hydrolase subunit B (abgB) of Escherichia coli (strain K12).